Consider the following 351-residue polypeptide: Phosphate acyltransferase (351 aa).

The protein belongs to the PlsX family. Homodimer. Probably interacts with PlsY.

Its subcellular location is the cytoplasm. The catalysed reaction is a fatty acyl-[ACP] + phosphate = an acyl phosphate + holo-[ACP]. The protein operates within lipid metabolism; phospholipid metabolism. Catalyzes the reversible formation of acyl-phosphate (acyl-PO(4)) from acyl-[acyl-carrier-protein] (acyl-ACP). This enzyme utilizes acyl-ACP as fatty acyl donor, but not acyl-CoA. This chain is Phosphate acyltransferase, found in Maricaulis maris (strain MCS10) (Caulobacter maris).